Reading from the N-terminus, the 988-residue chain is uncharacterized protein (988 aa).

Positions 1-17 (MIRLVFLFLLVVLSVEL) are cleaved as a signal peptide. The disordered stretch occupies residues 111–176 (YQNPSTFPST…SKLNQKSSKS (66 aa)). Over residues 114–140 (PSTFPSTTTASTTTSTTTMPPTYQTTT) the composition is skewed to low complexity. 4 N-linked (GlcNAc...) asparagine glycosylation sites follow: asparagine 247, asparagine 389, asparagine 529, and asparagine 601. A helical membrane pass occupies residues 690-710 (IMIFTIFSVLSALTCLMCMYL). Asparagine 720 is a glycosylation site (N-linked (GlcNAc...) asparagine). 6 helical membrane-spanning segments follow: residues 721–741 (LTAV…AFII), 753–773 (LLFP…TVLI), 784–804 (VLIA…WLLL), 832–852 (MILL…IFAL), 864–884 (LMIS…LPLI), and 891–911 (TVMA…SHTG). A disordered region spans residues 966-988 (RSEDTLRRNTSLYGTEGYELPTP). Asparagine 974 is a glycosylation site (N-linked (GlcNAc...) asparagine).

It localises to the membrane. This is an uncharacterized protein from Caenorhabditis elegans.